Consider the following 462-residue polypeptide: Serine carboxypeptidase-like 28 (462 aa).

Residues Met-1–Ser-26 form the signal peptide. 2 N-linked (GlcNAc...) asparagine glycosylation sites follow: Asn-49 and Asn-144. 3 disulfide bridges follow: Cys-93-Cys-342, Cys-254-Cys-266, and Cys-290-Cys-311. The active site involves Ser-186. The N-linked (GlcNAc...) asparagine glycan is linked to Asn-256. N-linked (GlcNAc...) asparagine glycosylation is present at Asn-334. Residues Asp-379 and His-434 contribute to the active site. Asn-454 carries N-linked (GlcNAc...) asparagine glycosylation.

This sequence belongs to the peptidase S10 family. In terms of tissue distribution, expressed in seedlings, roots and senescent leaves.

The protein localises to the secreted. In terms of biological role, probable carboxypeptidase. The polypeptide is Serine carboxypeptidase-like 28 (SCPL28) (Arabidopsis thaliana (Mouse-ear cress)).